Here is an 894-residue protein sequence, read N- to C-terminus: Tyrosine-protein kinase receptor UFO (894 aa).

Positions Met-1–Met-25 are cleaved as a signal peptide. The segment at Ala-26–Glu-92 is interaction with GAS6. Residues Ala-26 to Trp-451 are Extracellular-facing. 2 Ig-like C2-type domains span residues Pro-27–Ser-128 and Pro-139–Thr-222. Asn-43 is a glycosylation site (N-linked (GlcNAc...) asparagine). Cys-56 and Cys-117 are disulfide-bonded. N-linked (GlcNAc...) asparagine glycans are attached at residues Asn-157 and Asn-198. A disulfide bond links Cys-160 and Cys-205. Fibronectin type-III domains follow at residues Gln-227–Gly-331 and Pro-336–Pro-428. N-linked (GlcNAc...) asparagine glycans are attached at residues Asn-339, Asn-345, and Asn-401. A helical membrane pass occupies residues Tyr-452–Val-472. The Cytoplasmic segment spans residues His-473–Ala-894. A Protein kinase domain is found at Val-536–Leu-807. ATP-binding positions include Leu-542 to Val-550 and Lys-567. Residue Asp-672 is the Proton acceptor of the active site. 3 positions are modified to phosphotyrosine; by autocatalysis: Tyr-703, Tyr-779, and Tyr-821. Disordered regions lie at residues Asn-823–Ser-853 and Tyr-866–Ala-894. Tyr-866 is modified (phosphotyrosine; by autocatalysis). Phosphoserine is present on Ser-884.

This sequence belongs to the protein kinase superfamily. Tyr protein kinase family. AXL/UFO subfamily. In terms of assembly, heterodimer and heterotetramer with ligand GAS6. Interacts with CBL, GRB2, LCK, NCK2, PIK3R1, PIK3R2, PIK3R3, PLCG1, SOCS1 and TNS2. Part of a complex including AXL, TNK2 and GRB2, in which GRB2 promotes AXL recruitment by TNK2. Monoubiquitinated upon GAS6-binding. A very small proportion of the receptor could be subjected to polyubiquitination in a very transient fashion. Post-translationally, phosphorylated at tyrosine residues by autocatalysis, which activates kinase activity. In terms of tissue distribution, highly expressed in metastatic colon tumors. Expressed in primary colon tumors. Weakly expressed in normal colon tissue.

The protein resides in the cell membrane. The enzyme catalyses L-tyrosyl-[protein] + ATP = O-phospho-L-tyrosyl-[protein] + ADP + H(+). Its activity is regulated as follows. Activated by GAS6-binding and subsequent autophosphorylation. Functionally, receptor tyrosine kinase that transduces signals from the extracellular matrix into the cytoplasm by binding growth factor GAS6 and which is thus regulating many physiological processes including cell survival, cell proliferation, migration and differentiation. Ligand binding at the cell surface induces dimerization and autophosphorylation of AXL. Following activation by ligand, AXL binds and induces tyrosine phosphorylation of PI3-kinase subunits PIK3R1, PIK3R2 and PIK3R3; but also GRB2, PLCG1, LCK and PTPN11. Other downstream substrate candidates for AXL are CBL, NCK2, SOCS1 and TNS2. Recruitment of GRB2 and phosphatidylinositol 3 kinase regulatory subunits by AXL leads to the downstream activation of the AKT kinase. GAS6/AXL signaling plays a role in various processes such as endothelial cell survival during acidification by preventing apoptosis, optimal cytokine signaling during human natural killer cell development, hepatic regeneration, gonadotropin-releasing hormone neuron survival and migration, platelet activation, or regulation of thrombotic responses. Also plays an important role in inhibition of Toll-like receptors (TLRs)-mediated innate immune response. In terms of biological role, (Microbial infection) Acts as a receptor for lassa virus and lymphocytic choriomeningitis virus, possibly through GAS6 binding to phosphatidyl-serine at the surface of virion envelope. Its function is as follows. (Microbial infection) Acts as a receptor for Ebolavirus, possibly through GAS6 binding to phosphatidyl-serine at the surface of virion envelope. (Microbial infection) Promotes Zika virus entry in glial cells, Sertoli cells and astrocytes. Additionally, Zika virus potentiates AXL kinase activity to antagonize type I interferon signaling and thereby promotes infection. Interferon signaling inhibition occurs via an SOCS1-dependent mechanism. The sequence is that of Tyrosine-protein kinase receptor UFO (AXL) from Homo sapiens (Human).